The following is a 397-amino-acid chain: Putative teichuronic acid biosynthesis glycosyltransferase TuaH (397 aa).

Belongs to the glycosyltransferase group 1 family.

The protein operates within cell wall biogenesis; teichuronic acid biosynthesis. This is Putative teichuronic acid biosynthesis glycosyltransferase TuaH (tuaH) from Bacillus subtilis (strain 168).